We begin with the raw amino-acid sequence, 393 residues long: Isocitrate dehydrogenase [NADP] (393 aa).

Residues serine 102, asparagine 104, arginine 108, arginine 118, and arginine 142 each coordinate D-threo-isocitrate. A Mg(2+)-binding site is contributed by aspartate 283.

It belongs to the isocitrate and isopropylmalate dehydrogenases family. Homodimer. Mg(2+) is required as a cofactor. It depends on Mn(2+) as a cofactor.

It carries out the reaction D-threo-isocitrate + NADP(+) = 2-oxoglutarate + CO2 + NADPH. Catalyzes the oxidative decarboxylation of isocitrate to 2-oxoglutarate and carbon dioxide with the concomitant reduction of NADP(+). In Streptococcus mutans serotype c (strain ATCC 700610 / UA159), this protein is Isocitrate dehydrogenase [NADP] (icd).